Consider the following 544-residue polypeptide: Chaperonin GroEL (544 aa).

Residues 29–32 (TIGP), 86–90 (DGTTT), G413, 478–480 (NAA), and D494 each bind ATP.

Belongs to the chaperonin (HSP60) family. In terms of assembly, forms a cylinder of 14 subunits composed of two heptameric rings stacked back-to-back. Interacts with the co-chaperonin GroES.

The protein resides in the cytoplasm. It carries out the reaction ATP + H2O + a folded polypeptide = ADP + phosphate + an unfolded polypeptide.. Functionally, together with its co-chaperonin GroES, plays an essential role in assisting protein folding. The GroEL-GroES system forms a nano-cage that allows encapsulation of the non-native substrate proteins and provides a physical environment optimized to promote and accelerate protein folding. The polypeptide is Chaperonin GroEL (Exiguobacterium sp. (strain ATCC BAA-1283 / AT1b)).